Consider the following 266-residue polypeptide: GTP cyclohydrolase III (266 aa).

This sequence belongs to the archaeal-type GTP cyclohydrolase family.

The enzyme catalyses GTP + 3 H2O = 2-amino-5-formylamino-6-(5-phospho-D-ribosylamino)pyrimidin-4(3H)-one + 2 phosphate + 2 H(+). Catalyzes the formation of 2-amino-5-formylamino-6-ribofuranosylamino-4(3H)-pyrimidinone ribonucleotide monophosphate and inorganic phosphate from GTP. Also has an independent pyrophosphate phosphohydrolase activity. This chain is GTP cyclohydrolase III, found in Methanococcus maripaludis (strain C7 / ATCC BAA-1331).